We begin with the raw amino-acid sequence, 2238 residues long: Golgin subfamily A member 4 (2238 aa).

The segment at 1-90 is disordered; that stretch reads MFKKLKQKIS…QTFAQKLQLR (90 aa). Ser10 carries the phosphoserine modification. Positions 12 to 41 are enriched in low complexity; the sequence is EQQQLQQALAPAQASSSSSTPTRTRSRTSS. Position 39 is a phosphothreonine (Thr39). Residue Ser41 is modified to Phosphoserine. Polar residues-rich tracts occupy residues 52 to 62 and 73 to 85; these read NRENASTQATK and SPSQ…TFAQ. A phosphoserine mark is found at Ser93 and Ser100. 3 disordered regions span residues 132-154, 1695-1744, and 1770-1789; these read AAAF…NSDG, LKER…SQDC, and LEQG…HRAL. Positions 154 to 224 are interaction with MACF1; the sequence is GLSREQLLQR…EELQMDQQAK (71 aa). A coiled-coil region spans residues 156-2161; it reads SREQLLQRLR…RYEKNACAAT (2006 aa). The span at 1695–1711 shows a compositional bias: basic and acidic residues; the sequence is LKEREKQVHSLEDKLKN. The 48-residue stretch at 2178-2225 folds into the GRIP domain; that stretch reads LFGEPTEFEYLRKVMFEYMMGRETKTMAKVITTVLKFPDDQAQKILER.

In terms of assembly, homodimer. Interacts with GTP-bound ARL1 and ARL3. Interacts with MACF1. Directly interacts with TBC1D23. Interacts with FAM91A1; this interaction may be mediated by TBC1D23. In terms of tissue distribution, ubiquitous. Highly expressed in oligodendrocyte precursors, particularly at a stage just prior to myelination.

The protein localises to the cytoplasm. It is found in the golgi apparatus membrane. Its subcellular location is the golgi apparatus. It localises to the trans-Golgi network membrane. Involved in vesicular trafficking at the Golgi apparatus level. May play a role in delivery of transport vesicles containing GPI-linked proteins from the trans-Golgi network through its interaction with MACF1. Involved in endosome-to-Golgi trafficking. The sequence is that of Golgin subfamily A member 4 (Golga4) from Mus musculus (Mouse).